The sequence spans 215 residues: Probable transaldolase (215 aa).

Lysine 83 acts as the Schiff-base intermediate with substrate in catalysis.

The protein belongs to the transaldolase family. Type 3B subfamily.

The protein resides in the cytoplasm. It catalyses the reaction D-sedoheptulose 7-phosphate + D-glyceraldehyde 3-phosphate = D-erythrose 4-phosphate + beta-D-fructose 6-phosphate. Its pathway is carbohydrate degradation; pentose phosphate pathway; D-glyceraldehyde 3-phosphate and beta-D-fructose 6-phosphate from D-ribose 5-phosphate and D-xylulose 5-phosphate (non-oxidative stage): step 2/3. Functionally, transaldolase is important for the balance of metabolites in the pentose-phosphate pathway. The polypeptide is Probable transaldolase (Clostridium kluyveri (strain NBRC 12016)).